Reading from the N-terminus, the 181-residue chain is Mating-type M-specific polypeptide Mc (181 aa).

A DNA-binding region (HMG box) is located at residues 103-171 (TPRPPNAFIL…QHQKMYPGYK (69 aa)).

Its subcellular location is the nucleus. In terms of biological role, mating type proteins are sequence specific DNA-binding proteins that act as master switches in yeast differentiation by controlling gene expression in a cell type-specific fashion. Positive regulator of MFM genes. The HMG box recognizes the DNA sequence 5'-AACAAAG-3'. Required for conjugation and efficient meiosis. The sequence is that of Mating-type M-specific polypeptide Mc (matMc) from Schizosaccharomyces kambucha (Fission yeast).